The following is a 211-amino-acid chain: Protein-L-isoaspartate O-methyltransferase (211 aa).

S60 is a catalytic residue.

The protein belongs to the methyltransferase superfamily. L-isoaspartyl/D-aspartyl protein methyltransferase family.

It is found in the cytoplasm. The catalysed reaction is [protein]-L-isoaspartate + S-adenosyl-L-methionine = [protein]-L-isoaspartate alpha-methyl ester + S-adenosyl-L-homocysteine. Functionally, catalyzes the methyl esterification of L-isoaspartyl residues in peptides and proteins that result from spontaneous decomposition of normal L-aspartyl and L-asparaginyl residues. It plays a role in the repair and/or degradation of damaged proteins. In Pseudomonas fluorescens (strain Pf0-1), this protein is Protein-L-isoaspartate O-methyltransferase.